Reading from the N-terminus, the 225-residue chain is Probable septum site-determining protein MinC (225 aa).

It belongs to the MinC family. In terms of assembly, interacts with MinD and FtsZ.

Its function is as follows. Cell division inhibitor that blocks the formation of polar Z ring septums. Rapidly oscillates between the poles of the cell to destabilize FtsZ filaments that have formed before they mature into polar Z rings. Prevents FtsZ polymerization. The polypeptide is Probable septum site-determining protein MinC (Listeria monocytogenes serotype 4a (strain HCC23)).